The primary structure comprises 175 residues: 19.0 kDa class II heat shock protein (175 aa).

One can recognise a sHSP domain in the interval 42–165; that stretch reads DRRAMANTPM…KPRVVEVKVA (124 aa). Residues 145–175 form a disordered region; the sequence is TVDKKPPPEPKKPRVVEVKVAGAGEPKGKGK. The span at 146 to 161 shows a compositional bias: basic and acidic residues; that stretch reads VDKKPPPEPKKPRVVE.

Belongs to the small heat shock protein (HSP20) family. May form oligomeric structures.

The protein resides in the cytoplasm. In Oryza sativa subsp. japonica (Rice), this protein is 19.0 kDa class II heat shock protein (HSP19.0).